The chain runs to 444 residues: N-succinylarginine dihydrolase (444 aa).

Substrate contacts are provided by residues 19–28 (AGLSFGNVAS), N110, and 137–138 (HR). E174 is a catalytic residue. Position 214 (R214) interacts with substrate. H250 is a catalytic residue. The substrate site is built by D252 and N362. Catalysis depends on C368, which acts as the Nucleophile.

The protein belongs to the succinylarginine dihydrolase family. Homodimer.

It carries out the reaction N(2)-succinyl-L-arginine + 2 H2O + 2 H(+) = N(2)-succinyl-L-ornithine + 2 NH4(+) + CO2. It participates in amino-acid degradation; L-arginine degradation via AST pathway; L-glutamate and succinate from L-arginine: step 2/5. Functionally, catalyzes the hydrolysis of N(2)-succinylarginine into N(2)-succinylornithine, ammonia and CO(2). This chain is N-succinylarginine dihydrolase, found in Shewanella baltica (strain OS155 / ATCC BAA-1091).